Reading from the N-terminus, the 102-residue chain is 10 kDa heat shock protein, mitochondrial (102 aa).

Ala-2 carries the N-acetylalanine modification. Lys-8 is subject to N6-acetyllysine. The residue at position 28 (Lys-28) is an N6-succinyllysine. At Lys-40 the chain carries N6-acetyllysine; alternate. 3 positions are modified to N6-malonyllysine; alternate: Lys-40, Lys-54, and Lys-56. Residues Lys-40, Lys-54, Lys-56, Lys-66, and Lys-70 each carry the N6-succinyllysine; alternate modification. Residues Lys-56, Lys-66, and Lys-70 each carry the N6-acetyllysine; alternate modification. Thr-79 carries the post-translational modification Phosphothreonine. Residues Lys-80 and Lys-86 each carry the N6-acetyllysine; alternate modification. N6-succinyllysine; alternate occurs at positions 80 and 86. Lys-99 is modified (N6-acetyllysine).

It belongs to the GroES chaperonin family. In terms of assembly, homoheptamer arranged in a ring structure. 2 heptameric Hsp10 rings interact with a Hsp60 tetradecamer in the structure of a back-to-back double heptameric ring to form the symmetrical football complex.

It is found in the mitochondrion matrix. Co-chaperonin implicated in mitochondrial protein import and macromolecular assembly. Together with Hsp60, facilitates the correct folding of imported proteins. May also prevent misfolding and promote the refolding and proper assembly of unfolded polypeptides generated under stress conditions in the mitochondrial matrix. The functional units of these chaperonins consist of heptameric rings of the large subunit Hsp60, which function as a back-to-back double ring. In a cyclic reaction, Hsp60 ring complexes bind one unfolded substrate protein per ring, followed by the binding of ATP and association with 2 heptameric rings of the co-chaperonin Hsp10. This leads to sequestration of the substrate protein in the inner cavity of Hsp60 where, for a certain period of time, it can fold undisturbed by other cell components. Synchronous hydrolysis of ATP in all Hsp60 subunits results in the dissociation of the chaperonin rings and the release of ADP and the folded substrate protein. The sequence is that of 10 kDa heat shock protein, mitochondrial (HSPE1) from Bos taurus (Bovine).